Here is a 130-residue protein sequence, read N- to C-terminus: Glycine cleavage system H protein (130 aa).

The Lipoyl-binding domain occupies 25-107 (IATIGITEFA…YGEGWFLKVR (83 aa)). Residue Lys66 is modified to N6-lipoyllysine.

This sequence belongs to the GcvH family. The glycine cleavage system is composed of four proteins: P, T, L and H. (R)-lipoate serves as cofactor.

Functionally, the glycine cleavage system catalyzes the degradation of glycine. The H protein shuttles the methylamine group of glycine from the P protein to the T protein. The chain is Glycine cleavage system H protein from Nostoc sp. (strain PCC 7120 / SAG 25.82 / UTEX 2576).